Here is a 410-residue protein sequence, read N- to C-terminus: Heat stress transcription factor A-9 (410 aa).

Positions 1–44 (MGSKKRSPQHPAAAAPPPAVGGGGGGEVSGDGGASTANGPVVPK) are disordered. The span at 20–33 (VGGGGGGEVSGDGG) shows a compositional bias: gly residues. A coiled-coil region spans residues 171–246 (GLEKEVETLK…QLVQQQQQQR (76 aa)). The tract at residues 179–229 (LKRDKALLMQQLVDLRHYQQTSNLEVQNLIERLQVMEQNQQQMMALLAIVV) is hydrophobic repeat HR-A/B. Positions 256–260 (SKKRR) match the Nuclear localization signal motif. The Nuclear export signal motif lies at 279-290 (AHIVEYLPPVPE).

It belongs to the HSF family. Class A subfamily. In terms of assembly, homotrimer. In terms of processing, exhibits temperature-dependent phosphorylation.

Its subcellular location is the cytoplasm. The protein localises to the nucleus. Functionally, transcriptional regulator that specifically binds DNA of heat shock promoter elements (HSE). This Oryza sativa subsp. japonica (Rice) protein is Heat stress transcription factor A-9 (HSFA9).